The sequence spans 130 residues: Small ribosomal subunit protein eS6 (130 aa).

The disordered stretch occupies residues 78 to 98 (SGPPGFRPERKGERRRKTVRG).

Belongs to the eukaryotic ribosomal protein eS6 family.

The protein is Small ribosomal subunit protein eS6 of Methanopyrus kandleri (strain AV19 / DSM 6324 / JCM 9639 / NBRC 100938).